Consider the following 93-residue polypeptide: Small ribosomal subunit protein uS19c (93 aa).

Belongs to the universal ribosomal protein uS19 family.

Its subcellular location is the plastid. It is found in the chloroplast. Functionally, protein S19 forms a complex with S13 that binds strongly to the 16S ribosomal RNA. This chain is Small ribosomal subunit protein uS19c, found in Stigeoclonium helveticum (Green alga).